The sequence spans 528 residues: Protein phosphatase 1 regulatory subunit 16A (528 aa).

A coiled-coil region spans residues S18–Q45. The interval T19 to A59 is disordered. A compositionally biased stretch (basic and acidic residues) spans A40–A58. ANK repeat units follow at residues P70–L99, D103–A132, E136–A165, H231–A260, and D264–A293. 2 disordered regions span residues R330–R351 and Q367–R421. S433 is modified (phosphoserine). Residues Q462 to P505 are disordered. C524 carries S-palmitoyl cysteine lipidation. C525 is modified (cysteine methyl ester). The S-farnesyl cysteine moiety is linked to residue C525. A propeptide spans L526–M528 (removed in mature form).

Binds PP1.

The protein localises to the cell membrane. Functionally, inhibits protein phosphatase 1 activity toward phosphorylase, myosin light chain and myosin substrates. The polypeptide is Protein phosphatase 1 regulatory subunit 16A (PPP1R16A) (Homo sapiens (Human)).